A 283-amino-acid polypeptide reads, in one-letter code: Bifunctional protein FolD 1 (283 aa).

NADP(+) is bound by residues Gly166–Ser168 and Ile232.

The protein belongs to the tetrahydrofolate dehydrogenase/cyclohydrolase family. Homodimer.

The enzyme catalyses (6R)-5,10-methylene-5,6,7,8-tetrahydrofolate + NADP(+) = (6R)-5,10-methenyltetrahydrofolate + NADPH. The catalysed reaction is (6R)-5,10-methenyltetrahydrofolate + H2O = (6R)-10-formyltetrahydrofolate + H(+). It participates in one-carbon metabolism; tetrahydrofolate interconversion. Its function is as follows. Catalyzes the oxidation of 5,10-methylenetetrahydrofolate to 5,10-methenyltetrahydrofolate and then the hydrolysis of 5,10-methenyltetrahydrofolate to 10-formyltetrahydrofolate. This Lactobacillus johnsonii (strain CNCM I-12250 / La1 / NCC 533) protein is Bifunctional protein FolD 1.